Consider the following 225-residue polypeptide: Cytidylate kinase (225 aa).

Residue 12 to 20 (GPSGAGKGT) participates in ATP binding.

It belongs to the cytidylate kinase family. Type 1 subfamily.

Its subcellular location is the cytoplasm. It catalyses the reaction CMP + ATP = CDP + ADP. The catalysed reaction is dCMP + ATP = dCDP + ADP. This is Cytidylate kinase from Pectobacterium atrosepticum (strain SCRI 1043 / ATCC BAA-672) (Erwinia carotovora subsp. atroseptica).